Here is a 93-residue protein sequence, read N- to C-terminus: UPF0358 protein BPUM_1375 (93 aa).

The protein belongs to the UPF0358 family.

This is UPF0358 protein BPUM_1375 from Bacillus pumilus (strain SAFR-032).